A 252-amino-acid chain; its full sequence is Triosephosphate isomerase (252 aa).

Substrate is bound at residue 8–10 (NWK). The Electrophile role is filled by H95. E167 (proton acceptor) is an active-site residue. Residues G173, S212, and 233 to 234 (GG) contribute to the substrate site.

The protein belongs to the triosephosphate isomerase family. In terms of assembly, homodimer.

It is found in the cytoplasm. It carries out the reaction D-glyceraldehyde 3-phosphate = dihydroxyacetone phosphate. The protein operates within carbohydrate biosynthesis; gluconeogenesis. It functions in the pathway carbohydrate degradation; glycolysis; D-glyceraldehyde 3-phosphate from glycerone phosphate: step 1/1. Functionally, involved in the gluconeogenesis. Catalyzes stereospecifically the conversion of dihydroxyacetone phosphate (DHAP) to D-glyceraldehyde-3-phosphate (G3P). This is Triosephosphate isomerase from Lawsonia intracellularis (strain PHE/MN1-00).